Here is a 326-residue protein sequence, read N- to C-terminus: Protein TMED8 (326 aa).

The segment at 1–99 is disordered; it reads MSDRQAAEGP…EGQAPGEQAA (99 aa). The segment covering 50-65 has biased composition (low complexity); that stretch reads SSPLASASDPAAESSP. The GOLD domain maps to 160 to 324; it reads PPCVWTFAKV…NKTLYFHIYY (165 aa). At Lys170 the chain carries N6-acetyllysine. Residues 234 to 268 form a disordered region; that stretch reads VQVSDSSEDEEEEEDEEEEIEEPVPVGDVERGSRS. A compositionally biased stretch (acidic residues) spans 239–255; it reads SSEDEEEEEDEEEEIEE.

In Mus musculus (Mouse), this protein is Protein TMED8 (Tmed8).